The primary structure comprises 204 residues: MANQPRPKVKKSRALGIALTPKAVKYFEARPYPPGEHGRGRKQNSDYKVRLLEKQRLRAQYDLSERQLVRAYERASKTNMKTGEALVIELERRLDALVLRSGIARTIYQARQMVVHGHIQVNGQKVDKPSFRVRPDDVVQVRERSKEKTLFTIAREGGFAPDGETPRYLQVNLKALAFRLDREPNRKEIPVICDEQLVVEYYAR.

In terms of domain architecture, S4 RNA-binding spans 92 to 153; the sequence is RRLDALVLRS…RSKEKTLFTI (62 aa).

It belongs to the universal ribosomal protein uS4 family. In terms of assembly, part of the 30S ribosomal subunit. Contacts protein S5. The interaction surface between S4 and S5 is involved in control of translational fidelity.

Functionally, one of the primary rRNA binding proteins, it binds directly to 16S rRNA where it nucleates assembly of the body of the 30S subunit. With S5 and S12 plays an important role in translational accuracy. This chain is Small ribosomal subunit protein uS4, found in Streptomyces coelicolor (strain ATCC BAA-471 / A3(2) / M145).